A 260-amino-acid chain; its full sequence is Granzyme A (260 aa).

The N-terminal stretch at 1–26 (MRNASGPRGPSLATLLFLLLIPEGGC) is a signal peptide. Positions 27–28 (ER) are cleaved as a propeptide — activation peptide. In terms of domain architecture, Peptidase S1 spans 29–257 (IIGGDTVVPH…HLNWIKKIMK (229 aa)). C54 and C70 are joined by a disulfide. Active-site charge relay system residues include H69 and D113. Disulfide bonds link C147–C217, C178–C196, and C207–C232. N157 and N169 each carry an N-linked (GlcNAc...) asparagine glycan. The active-site Charge relay system is the S211.

It belongs to the peptidase S1 family. Granzyme subfamily. Homodimer; disulfide-linked. Interacts with APEX1. As to expression, found in cytotoxic lymphocytes and in normal lymphoid tissues such as thymus and spleen. In terms of tissue distribution, more abundant in lymphoid tissues than isoform HF2.

It localises to the secreted. It is found in the cytoplasmic granule. It catalyses the reaction Hydrolysis of proteins, including fibronectin, type IV collagen and nucleolin. Preferential cleavage: -Arg-|-Xaa-, -Lys-|-Xaa- &gt;&gt; -Phe-|-Xaa- in small molecule substrates.. Functionally, abundant protease in the cytosolic granules of cytotoxic T-cells and NK-cells which activates caspase-independent pyroptosis when delivered into the target cell through the immunological synapse. It cleaves after Lys or Arg. Cleaves APEX1 after 'Lys-31' and destroys its oxidative repair activity. Cleaves the nucleosome assembly protein SET after 'Lys-189', which disrupts its nucleosome assembly activity and allows the SET complex to translocate into the nucleus to nick and degrade the DNA. The sequence is that of Granzyme A (Gzma) from Mus musculus (Mouse).